Reading from the N-terminus, the 366-residue chain is MVLSSQPPSSRSATGSVLSWPQVLGRLTAGQDLTRGQAAWAMGQVMTGNARPAQIAAFAVAMKMKVPTAAEVSELADVMLSHARKLPTEAICQDIGETVDIAGTGGDGANTVNLSTMAAIVVAAAGVPVVKHGNRASSSLSGGADTLEALGVRIDLGPEQVANSLAEIGIGFCFAPLFQPSYRYASAVRHEIGVPTVFNILGPLTNPAWPRAGLIGCAFGNLAEVMAGVFAARRSSVLVVHGDDGLDELTTTTTSTIWRVQAGTVDKLTFDPVEFGFARAHLDDLLGGDAQTNAAKVRAVLAGAKGPVRDAVVLNAAGAIVAYAGLSSHAEWSPAWDDGLARASAAIDSGAAEQLLARWVRFSQQV.

5-phospho-alpha-D-ribose 1-diphosphate is bound by residues Gly-103, 106–107 (GD), Thr-111, 113–116 (NLST), 131–139 (KHGNRASSS), and Gly-143. Gly-103 contributes to the anthranilate binding site. Ser-115 serves as a coordination point for Mg(2+). Asn-134 contacts anthranilate. Residue Arg-189 participates in anthranilate binding. 2 residues coordinate Mg(2+): Asp-247 and Glu-248.

Belongs to the anthranilate phosphoribosyltransferase family. As to quaternary structure, homodimer. Mg(2+) is required as a cofactor.

It catalyses the reaction N-(5-phospho-beta-D-ribosyl)anthranilate + diphosphate = 5-phospho-alpha-D-ribose 1-diphosphate + anthranilate. Its pathway is amino-acid biosynthesis; L-tryptophan biosynthesis; L-tryptophan from chorismate: step 2/5. Functionally, catalyzes the transfer of the phosphoribosyl group of 5-phosphorylribose-1-pyrophosphate (PRPP) to anthranilate to yield N-(5'-phosphoribosyl)-anthranilate (PRA). In Mycobacterium leprae (strain Br4923), this protein is Anthranilate phosphoribosyltransferase.